Consider the following 426-residue polypeptide: Gamma-glutamyl phosphate reductase (426 aa).

This sequence belongs to the gamma-glutamyl phosphate reductase family.

The protein localises to the cytoplasm. It carries out the reaction L-glutamate 5-semialdehyde + phosphate + NADP(+) = L-glutamyl 5-phosphate + NADPH + H(+). It functions in the pathway amino-acid biosynthesis; L-proline biosynthesis; L-glutamate 5-semialdehyde from L-glutamate: step 2/2. In terms of biological role, catalyzes the NADPH-dependent reduction of L-glutamate 5-phosphate into L-glutamate 5-semialdehyde and phosphate. The product spontaneously undergoes cyclization to form 1-pyrroline-5-carboxylate. The polypeptide is Gamma-glutamyl phosphate reductase (Ralstonia nicotianae (strain ATCC BAA-1114 / GMI1000) (Ralstonia solanacearum)).